Here is a 435-residue protein sequence, read N- to C-terminus: Iron(III) enterobactin esterase (435 aa).

Belongs to the Fes family.

It localises to the cytoplasm. The enzyme catalyses Fe(III)-enterobactin + 3 H2O + H(+) = Fe(III)-[N-(2,3-dihydroxybenzoyl)-L-serine] + 2 N-(2,3-dihydroxybenzoyl)-L-serine. The catalysed reaction is Fe(III)-enterobactin + H2O = Fe(III)-[N-(2,3-dihydroxybenzoyl)-L-serine]3 + H(+). It carries out the reaction Fe(III)-[N-(2,3-dihydroxybenzoyl)-L-serine]3 + H2O + H(+) = Fe(III)-[N-(2,3-dihydroxybenzoyl)-L-serine]2 + N-(2,3-dihydroxybenzoyl)-L-serine. It catalyses the reaction Fe(III)-[N-(2,3-dihydroxybenzoyl)-L-serine]2 + H2O + H(+) = Fe(III)-[N-(2,3-dihydroxybenzoyl)-L-serine] + N-(2,3-dihydroxybenzoyl)-L-serine. Functionally, catalyzes the hydrolysis of ferric enterobactin (Fe-Ent). Is responsible for the release of iron from ferric enterobactin. The polypeptide is Iron(III) enterobactin esterase (fes) (Dickeya dadantii (strain 3937) (Erwinia chrysanthemi (strain 3937))).